The sequence spans 111 residues: uncharacterized protein (111 aa).

The helical transmembrane segment at 81-101 (YFFLLFYVSFPHIFLGLFFFI) threads the bilayer.

It is found in the membrane. This is an uncharacterized protein from Schizosaccharomyces pombe (strain 972 / ATCC 24843) (Fission yeast).